A 295-amino-acid polypeptide reads, in one-letter code: 4-diphosphocytidyl-2-C-methyl-D-erythritol kinase (295 aa).

Lysine 22 is a catalytic residue. An ATP-binding site is contributed by 106-116 (PAGGGFGGGSS). The active site involves aspartate 148.

This sequence belongs to the GHMP kinase family. IspE subfamily.

It catalyses the reaction 4-CDP-2-C-methyl-D-erythritol + ATP = 4-CDP-2-C-methyl-D-erythritol 2-phosphate + ADP + H(+). Its pathway is isoprenoid biosynthesis; isopentenyl diphosphate biosynthesis via DXP pathway; isopentenyl diphosphate from 1-deoxy-D-xylulose 5-phosphate: step 3/6. In terms of biological role, catalyzes the phosphorylation of the position 2 hydroxy group of 4-diphosphocytidyl-2C-methyl-D-erythritol. The polypeptide is 4-diphosphocytidyl-2-C-methyl-D-erythritol kinase (Xanthomonas euvesicatoria pv. vesicatoria (strain 85-10) (Xanthomonas campestris pv. vesicatoria)).